A 134-amino-acid chain; its full sequence is Small ribosomal subunit protein uS12 (134 aa).

A 3-methylthioaspartic acid modification is found at Asp-89. The disordered stretch occupies residues 101–134; it reads TLDASGVNGRNQSRSKYGTKRPKPGQAAAGGKKK. The segment covering 125 to 134 has biased composition (low complexity); the sequence is GQAAAGGKKK.

This sequence belongs to the universal ribosomal protein uS12 family. Part of the 30S ribosomal subunit. Contacts proteins S8 and S17. May interact with IF1 in the 30S initiation complex.

Its function is as follows. With S4 and S5 plays an important role in translational accuracy. Interacts with and stabilizes bases of the 16S rRNA that are involved in tRNA selection in the A site and with the mRNA backbone. Located at the interface of the 30S and 50S subunits, it traverses the body of the 30S subunit contacting proteins on the other side and probably holding the rRNA structure together. The combined cluster of proteins S8, S12 and S17 appears to hold together the shoulder and platform of the 30S subunit. The sequence is that of Small ribosomal subunit protein uS12 from Gemmatimonas aurantiaca (strain DSM 14586 / JCM 11422 / NBRC 100505 / T-27).